We begin with the raw amino-acid sequence, 571 residues long: Calcium-dependent protein kinase 16 (571 aa).

The tract at residues Met-1 to Val-74 is disordered. A lipid anchor (N-myristoyl glycine) is attached at Gly-2. Cys-4 is lipidated: S-palmitoyl cysteine. Residues Thr-63–Gly-72 show a composition bias toward basic residues. One can recognise a Protein kinase domain in the interval Tyr-108–Val-368. Residues Leu-114–Thr-122 and Lys-137 contribute to the ATP site. Asp-234 acts as the Proton acceptor in catalysis. Ser-274 carries the phosphoserine modification. The autoinhibitory domain stretch occupies residues Ala-374–Leu-404. EF-hand domains lie at Glu-411–Trp-446, Leu-448–Leu-483, Lys-490–Ile-525, and Leu-528–Lys-555. Positions 424, 426, 428, 435, 461, 463, 465, 472, 503, 505, 507, 514, 533, 535, 537, and 539 each coordinate Ca(2+). At Ser-541 the chain carries Phosphoserine. Position 544 (Glu-544) interacts with Ca(2+).

Belongs to the protein kinase superfamily. Ser/Thr protein kinase family. CDPK subfamily.

The protein localises to the cell membrane. The protein resides in the nucleus. The catalysed reaction is L-seryl-[protein] + ATP = O-phospho-L-seryl-[protein] + ADP + H(+). The enzyme catalyses L-threonyl-[protein] + ATP = O-phospho-L-threonyl-[protein] + ADP + H(+). Its activity is regulated as follows. Activated by calcium. Autophosphorylation may play an important role in the regulation of the kinase activity. Its function is as follows. May play a role in signal transduction pathways that involve calcium as a second messenger. The chain is Calcium-dependent protein kinase 16 (CPK16) from Arabidopsis thaliana (Mouse-ear cress).